We begin with the raw amino-acid sequence, 143 residues long: Transcriptional regulator MraZ (143 aa).

SpoVT-AbrB domains are found at residues 5–47 (TYTP…PREE) and 76–119 (ADEQ…DAAA).

The protein belongs to the MraZ family. As to quaternary structure, forms oligomers.

The protein localises to the cytoplasm. Its subcellular location is the nucleoid. The polypeptide is Transcriptional regulator MraZ (Corynebacterium diphtheriae (strain ATCC 700971 / NCTC 13129 / Biotype gravis)).